A 397-amino-acid polypeptide reads, in one-letter code: Carbamoyl phosphate synthase small chain (397 aa).

A CPSase region spans residues 1-204 (MKHVLRKEKT…NAKLKEKIWH (204 aa)). L-glutamine contacts are provided by S57, G252, and G254. A Glutamine amidotransferase type-1 domain is found at 204 to 391 (HVVVYDFGVK…IKLMKKSYNS (188 aa)). The Nucleophile role is filled by C280. The L-glutamine site is built by L281, Q284, N322, and Y325. Residues H364 and E366 contribute to the active site.

The protein belongs to the CarA family. In terms of assembly, composed of two chains; the small (or glutamine) chain promotes the hydrolysis of glutamine to ammonia, which is used by the large (or ammonia) chain to synthesize carbamoyl phosphate. Tetramer of heterodimers (alpha,beta)4.

It carries out the reaction hydrogencarbonate + L-glutamine + 2 ATP + H2O = carbamoyl phosphate + L-glutamate + 2 ADP + phosphate + 2 H(+). The catalysed reaction is L-glutamine + H2O = L-glutamate + NH4(+). Its pathway is amino-acid biosynthesis; L-arginine biosynthesis; carbamoyl phosphate from bicarbonate: step 1/1. It functions in the pathway pyrimidine metabolism; UMP biosynthesis via de novo pathway; (S)-dihydroorotate from bicarbonate: step 1/3. Its function is as follows. Small subunit of the glutamine-dependent carbamoyl phosphate synthetase (CPSase). CPSase catalyzes the formation of carbamoyl phosphate from the ammonia moiety of glutamine, carbonate, and phosphate donated by ATP, constituting the first step of 2 biosynthetic pathways, one leading to arginine and/or urea and the other to pyrimidine nucleotides. The small subunit (glutamine amidotransferase) binds and cleaves glutamine to supply the large subunit with the substrate ammonia. This chain is Carbamoyl phosphate synthase small chain, found in Buchnera aphidicola subsp. Baizongia pistaciae (strain Bp).